The following is a 198-amino-acid chain: NADH-quinone oxidoreductase subunit I (198 aa).

4Fe-4S ferredoxin-type domains follow at residues 42-72 and 88-117; these read LNRW…VEGA and RVYE…MTND. Residues C52, C55, C58, C62, C97, C100, C103, and C107 each coordinate [4Fe-4S] cluster. The tract at residues 137–198 is disordered; sequence APLKEGMEQP…DTQHKDEEAA (62 aa). A compositionally biased stretch (basic and acidic residues) spans 182–198; it reads AHRDDDNDTQHKDEEAA.

It belongs to the complex I 23 kDa subunit family. As to quaternary structure, NDH-1 is composed of 14 different subunits. Subunits NuoA, H, J, K, L, M, N constitute the membrane sector of the complex. It depends on [4Fe-4S] cluster as a cofactor.

It localises to the cell membrane. It catalyses the reaction a quinone + NADH + 5 H(+)(in) = a quinol + NAD(+) + 4 H(+)(out). Its function is as follows. NDH-1 shuttles electrons from NADH, via FMN and iron-sulfur (Fe-S) centers, to quinones in the respiratory chain. The immediate electron acceptor for the enzyme in this species is believed to be ubiquinone. Couples the redox reaction to proton translocation (for every two electrons transferred, four hydrogen ions are translocated across the cytoplasmic membrane), and thus conserves the redox energy in a proton gradient. This Cutibacterium acnes (strain DSM 16379 / KPA171202) (Propionibacterium acnes) protein is NADH-quinone oxidoreductase subunit I.